The primary structure comprises 307 residues: Alginate lyase (307 aa).

Residues 1–20 (MLKSGVMVASLCLFSVPSRA) form the signal peptide.

It belongs to the polysaccharide lyase 7 family.

It localises to the secreted. It catalyses the reaction Eliminative cleavage of alginate to give oligosaccharides with 4-deoxy-alpha-L-erythro-hex-4-enuronosyl groups at their non-reducing ends and beta-D-mannuronate at their reducing end.. In terms of biological role, degrades alginates that contain guluronic acid. In Klebsiella pneumoniae, this protein is Alginate lyase (alyA).